The primary structure comprises 373 residues: GDP-mannose 4,6-dehydratase (373 aa).

NADP(+) contacts are provided by residues 9-14, 64-65, 86-90, and Y101; these read GVTGQD, DL, and LGAMS. Residue T133 is part of the active site. Active-site nucleophile residues include E135 and Y157. The NADP(+) site is built by K161, H187, and R192.

The protein belongs to the NAD(P)-dependent epimerase/dehydratase family. GDP-mannose 4,6-dehydratase subfamily. Requires NADP(+) as cofactor.

It carries out the reaction GDP-alpha-D-mannose = GDP-4-dehydro-alpha-D-rhamnose + H2O. Its pathway is nucleotide-sugar biosynthesis; GDP-L-fucose biosynthesis via de novo pathway; GDP-L-fucose from GDP-alpha-D-mannose: step 1/2. Functionally, catalyzes the conversion of GDP-D-mannose to GDP-4-dehydro-6-deoxy-D-mannose. The protein is GDP-mannose 4,6-dehydratase of Escherichia coli O157:H7.